Here is a 462-residue protein sequence, read N- to C-terminus: DNA polymerase delta subunit 3 (462 aa).

At alanine 2 the chain carries N-acetylalanine. 4 disordered regions span residues alanine 144–glutamine 186, threonine 200–glycine 230, alanine 254–lysine 384, and serine 403–lysine 462. A compositionally biased stretch (polar residues) spans glutamine 156 to glycine 174. The span at aspartate 204–glutamate 215 shows a compositional bias: basic and acidic residues. Over residues serine 218–glycine 230 the composition is skewed to low complexity. Residue lysine 256 forms a Glycyl lysine isopeptide (Lys-Gly) (interchain with G-Cter in SUMO); alternate linkage. Residue lysine 256 forms a Glycyl lysine isopeptide (Lys-Gly) (interchain with G-Cter in SUMO2); alternate linkage. A Glycyl lysine isopeptide (Lys-Gly) (interchain with G-Cter in SUMO2) cross-link involves residue lysine 259. Residues arginine 284 to leucine 305 are compositionally biased toward basic and acidic residues. Position 306 is a phosphoserine (serine 306). A compositionally biased stretch (acidic residues) spans serine 330–glutamate 344. Residues proline 348–valine 368 are compositionally biased toward pro residues. A phosphoserine mark is found at serine 403 and serine 405. At threonine 407 the chain carries Phosphothreonine. Serine 409 bears the Phosphoserine mark. Positions lysine 416–alanine 427 are enriched in low complexity. A compositionally biased stretch (basic and acidic residues) spans valine 428–lysine 437. A Glycyl lysine isopeptide (Lys-Gly) (interchain with G-Cter in SUMO); alternate cross-link involves residue lysine 429. Lysine 429 participates in a covalent cross-link: Glycyl lysine isopeptide (Lys-Gly) (interchain with G-Cter in SUMO2); alternate. Over residues arginine 451–lysine 462 the composition is skewed to polar residues. A PIP-box motif is present at residues glutamine 452 to phenylalanine 459. Phosphoserine is present on serine 454.

As to quaternary structure, component of both the DNA polymerase delta and DNA polymerase zeta complexes. The tetrameric DNA polymerase delta complex (Pol-delta4), which consists of POLD1/p125, POLD2/p50, POLD3/p66/p68 and POLD4/p12, with POLD1 bearing DNA polymerase and 3' to 5' proofreading exonuclease activities. Within this complex, directly interacts with POLD2. Following stress caused by DNA damaging agents or by replication stress, POLD4 is degraded and Pol-delta4 is converted into a trimeric form of the complex (Pol-delta3), which consists of POLD1, POLD2 and POLD3. Pol-delta3 is the major form occurring at S phase replication sites, as well as DNA damage sites. Directly interacts with PCNA, as do POLD1 and POLD4; this interaction stimulates Pol-delta polymerase activity. POLD3 phosphorylation at Ser-454 impairs PCNA binding. Component of the DNA polymerase zeta complex (POLZ), which consists of REV3L, MAD2L2, POLD2 and POLD3, with REV3L bearing DNA polymerase catalytic activity. The DNA polymerase delta complex interacts with POLDIP2; this interaction is probably mediated through direct binding to POLD2. Post-translationally, ubiquitinated, but not targeted to the proteasome. Sumoylated. Sumoylation by SUMO3 may be predominant. Phosphorylation at Ser-454 is thought to decrease the affinity for PCNA and Pol-delta4 processivity. May be phosphorylated by CDK1-cyclin-A complex, as well as CDK2-cyclin-A and CDK2-cyclin-E complexes. PCNA interferes with CDK-cyclin phosphorylation.

It localises to the cytoplasm. Its subcellular location is the nucleus. Functionally, accessory component of both the DNA polymerase delta complex and the DNA polymerase zeta complex. As a component of the trimeric and tetrameric DNA polymerase delta complexes (Pol-delta3 and Pol-delta4, respectively), plays a role in high fidelity genome replication, including in lagging strand synthesis, and repair. Required for optimal Pol-delta activity. Stabilizes the Pol-delta complex and plays a major role in Pol-delta stimulation by PCNA. Pol-delta3 and Pol-delta4 are characterized by the absence or the presence of POLD4. They exhibit differences in catalytic activity. Most notably, Pol-delta3 shows higher proofreading activity than Pol-delta4. Although both Pol-delta3 and Pol-delta4 process Okazaki fragments in vitro, Pol-delta3 may also be better suited to fulfill this task, exhibiting near-absence of strand displacement activity compared to Pol-delta4 and stalling on encounter with the 5'-blocking oligonucleotides. Pol-delta3 idling process may avoid the formation of a gap, while maintaining a nick that can be readily ligated. Along with DNA polymerase kappa, DNA polymerase delta carries out approximately half of nucleotide excision repair (NER) synthesis following UV irradiation. In this context, POLD3, along with PCNA and RFC1-replication factor C complex, is required to recruit POLD1, the catalytic subunit of the polymerase delta complex, to DNA damage sites. Under conditions of DNA replication stress, required for the repair of broken replication forks through break-induced replication (BIR). Involved in the translesion synthesis (TLS) of templates carrying O6-methylguanine or abasic sites performed by Pol-delta4, independently of DNA polymerase zeta (REV3L) or eta (POLH). Facilitates abasic site bypass by DNA polymerase delta by promoting extension from the nucleotide inserted opposite the lesion. Also involved in TLS, as a component of the tetrameric DNA polymerase zeta complex. Along with POLD2, dramatically increases the efficiency and processivity of DNA synthesis of the DNA polymerase zeta complex compared to the minimal zeta complex, consisting of only REV3L and REV7. The chain is DNA polymerase delta subunit 3 (Pold3) from Mus musculus (Mouse).